Reading from the N-terminus, the 364-residue chain is Chorismate synthase (364 aa).

Arg-48 contacts NADP(+). FMN is bound by residues 131–133 (RSS), 243–244 (NA), Gly-288, 303–307 (KPTSS), and Arg-329.

Belongs to the chorismate synthase family. Homotetramer. FMNH2 is required as a cofactor.

It catalyses the reaction 5-O-(1-carboxyvinyl)-3-phosphoshikimate = chorismate + phosphate. The protein operates within metabolic intermediate biosynthesis; chorismate biosynthesis; chorismate from D-erythrose 4-phosphate and phosphoenolpyruvate: step 7/7. Its function is as follows. Catalyzes the anti-1,4-elimination of the C-3 phosphate and the C-6 proR hydrogen from 5-enolpyruvylshikimate-3-phosphate (EPSP) to yield chorismate, which is the branch point compound that serves as the starting substrate for the three terminal pathways of aromatic amino acid biosynthesis. This reaction introduces a second double bond into the aromatic ring system. This Brucella anthropi (strain ATCC 49188 / DSM 6882 / CCUG 24695 / JCM 21032 / LMG 3331 / NBRC 15819 / NCTC 12168 / Alc 37) (Ochrobactrum anthropi) protein is Chorismate synthase.